Reading from the N-terminus, the 380-residue chain is 8-amino-7-oxononanoate synthase (380 aa).

R26 contributes to the substrate binding site. 104–105 (GY) provides a ligand contact to pyridoxal 5'-phosphate. Residue H129 participates in substrate binding. Pyridoxal 5'-phosphate contacts are provided by residues S175, 200-203 (DEAH), and 232-235 (TLSK). K235 carries the post-translational modification N6-(pyridoxal phosphate)lysine. T345 provides a ligand contact to substrate.

Belongs to the class-II pyridoxal-phosphate-dependent aminotransferase family. BioF subfamily. In terms of assembly, homodimer. Pyridoxal 5'-phosphate is required as a cofactor.

The enzyme catalyses 6-carboxyhexanoyl-[ACP] + L-alanine + H(+) = (8S)-8-amino-7-oxononanoate + holo-[ACP] + CO2. It participates in cofactor biosynthesis; biotin biosynthesis. Its function is as follows. Catalyzes the decarboxylative condensation of pimeloyl-[acyl-carrier protein] and L-alanine to produce 8-amino-7-oxononanoate (AON), [acyl-carrier protein], and carbon dioxide. The protein is 8-amino-7-oxononanoate synthase of Mycolicibacterium gilvum (strain PYR-GCK) (Mycobacterium gilvum (strain PYR-GCK)).